Reading from the N-terminus, the 2143-residue chain is Proteasome activator BLM10 (2143 aa).

A disordered region spans residues 1–65 (MTANNDDDIK…SPLRARSATP (65 aa)). Residues Ser11, Ser29, Ser56, and Ser62 each carry the phosphoserine modification. 2 positions are modified to phosphothreonine: Thr64 and Thr66. Ser1041 carries the phosphoserine modification. An HEAT 1 repeat occupies 1316–1355 (VVINKIIPSLEKAIKDHDYMKIQVILNVLLIKKIHRKLMT). Residues 1648–1732 (CELNMSDLFE…LAWWLPAVVD (85 aa)) form a bromodomain-like (BRDL) region. HEAT repeat units lie at residues 1779 to 1814 (PDVG…NQSN), 1902 to 1941 (YLVD…MPIR), and 1985 to 2023 (EEKN…NWKE). The YYX motif signature appears at 2141 to 2143 (YYA).

This sequence belongs to the BLM10 family. According to PubMed:12973301, colocalizes with nascent proteasome. According to PubMed:15778719, associates with proteasome core particles and also forms a complex with regulatory particle-core particle (RP-CP).

It localises to the nucleus. It is found in the cytoplasm. In terms of biological role, associated component of the proteasome that specifically recognizes acetylated histones and promotes ATP- and ubiquitin-independent degradation of core histones during DNA damage response. Recognizes and binds acetylated histones via its bromodomain-like (BRDL) region and activates the proteasome by opening the gated channel for substrate entry. Binds to the core proteasome via its C-terminus, which occupies the same binding sites as the proteasomal ATPases, opening the closed structure of the proteasome via an active gating mechanism. Involved in DNA damage response in somatic cells: binds to acetylated histones and promotes degradation of histones following DNA double-strand breaks. The chain is Proteasome activator BLM10 (BLM10) from Saccharomyces cerevisiae (strain ATCC 204508 / S288c) (Baker's yeast).